Reading from the N-terminus, the 193-residue chain is Probable GTP-binding protein EngB (193 aa).

The EngB-type G domain maps to 22–193; that stretch reads SFPEIVFAGR…LAHFDQYICQ (172 aa). Residues 30–37, 57–61, 75–78, 142–145, and 172–174 each bind GTP; these read GRSNVGKS, GKTRL, DLPG, TKYD, and YSS. Positions 37 and 59 each coordinate Mg(2+).

Belongs to the TRAFAC class TrmE-Era-EngA-EngB-Septin-like GTPase superfamily. EngB GTPase family. Requires Mg(2+) as cofactor.

Its function is as follows. Necessary for normal cell division and for the maintenance of normal septation. The polypeptide is Probable GTP-binding protein EngB (Pelodictyon phaeoclathratiforme (strain DSM 5477 / BU-1)).